Consider the following 461-residue polypeptide: Cysteine--tRNA ligase (461 aa).

Cysteine 31 serves as a coordination point for Zn(2+). Positions 33–43 (PTVYDFAHIGN) match the 'HIGH' region motif. The Zn(2+) site is built by cysteine 219, histidine 244, and glutamate 248. A 'KMSKS' region motif is present at residues 277 to 281 (KMSKS). Lysine 280 serves as a coordination point for ATP. Residues 436-452 (SEKGIQLKDGKDKETGE) are compositionally biased toward basic and acidic residues. The tract at residues 436-461 (SEKGIQLKDGKDKETGERTTTWELKR) is disordered.

It belongs to the class-I aminoacyl-tRNA synthetase family. In terms of assembly, monomer. It depends on Zn(2+) as a cofactor.

The protein resides in the cytoplasm. It carries out the reaction tRNA(Cys) + L-cysteine + ATP = L-cysteinyl-tRNA(Cys) + AMP + diphosphate. This chain is Cysteine--tRNA ligase, found in Agrobacterium fabrum (strain C58 / ATCC 33970) (Agrobacterium tumefaciens (strain C58)).